Consider the following 332-residue polypeptide: Nicotianamine synthase 1 (332 aa).

This sequence belongs to the nicotianamine synthase (NAS)-like family. Expressed in roots.

The enzyme catalyses 3 S-adenosyl-L-methionine = nicotianamine + 3 S-methyl-5'-thioadenosine + 3 H(+). Its function is as follows. Synthesizes nicotianamine, a polyamine that is the first intermediate in the synthesis of the phytosiderophores of the mugineic acid type found in gramineae which serve as a sensor for the physiological iron status within the plant, and/or might be involved in the transport of iron. The protein is Nicotianamine synthase 1 (NAS1) of Oryza sativa subsp. indica (Rice).